The chain runs to 240 residues: Splicing factor rtf2 (240 aa).

Disordered stretches follow at residues 1 to 22 (MGNDGGSLPTRNELVKEPGKVP) and 181 to 240 (SLNK…RVKI). Over residues 185–210 (ASKKSNKNGDKKRKHVSKSNSKHAKH) the composition is skewed to basic residues. Composition is skewed to basic and acidic residues over residues 211–224 (ELRTNRMLDGENVK) and 231–240 (DMERVKRVKI).

The protein belongs to the rtf2 family. In terms of assembly, interacts with pcn1.

Its subcellular location is the nucleus. Functionally, putative splicing factor that is required for the correct splicing of a subset of pre-mRNAs. Required for the correct splicing of rtf1, a replication termination factor that mediates site-specific replication termination at replication barrier RTS1. The chain is Splicing factor rtf2 from Schizosaccharomyces pombe (strain 972 / ATCC 24843) (Fission yeast).